A 243-amino-acid chain; its full sequence is Complement C1q tumor necrosis factor-related protein 5 (243 aa).

An N-terminal signal peptide occupies residues 1–15 (MRPLLALLLLGLASG). The tract at residues 15–124 (GSPPLDDNKI…VPPPADTPLP (110 aa)) is disordered. Positions 30–95 (GQPGLPGTPG…AGPVGAIGPA (66 aa)) constitute a Collagen-like domain. One can recognise a C1q domain in the interval 99 to 238 (SVPPRSAFSA…GFLVYSDWHS (140 aa)).

Homotrimer (via collagen-like domain). May form higher order oligomers by supercoiling of the trimers. May interact with ERFE.

The protein localises to the secreted. The sequence is that of Complement C1q tumor necrosis factor-related protein 5 (C1qtnf5) from Rattus norvegicus (Rat).